Reading from the N-terminus, the 797-residue chain is Ribosome biogenesis protein BOP1 homolog (797 aa).

Disordered regions lie at residues 22-112 (LVPS…GGGP) and 149-177 (SICA…RNTV). The segment covering 61 to 73 (AGAAAAAVEGTAA) has biased composition (low complexity). A compositionally biased stretch (acidic residues) spans 74–87 (PEDEAADNSSEEDA). Residues 90 to 112 (GSHGEGAGEGGGSGTWPGNGGGP) show a composition bias toward gly residues. WD repeat units lie at residues 462 to 502 (GHMG…CWRT), 504 to 544 (VLEG…EEAE), 581 to 623 (RLRF…SQNP), 626 to 664 (KNRG…LAKK), 667 to 706 (GGGG…KPYK), 710 to 749 (YHSA…DLLT), and 766 to 797 (TASE…LYCN).

This sequence belongs to the WD repeat BOP1/ERB1 family.

It localises to the nucleus. It is found in the nucleolus. Its subcellular location is the nucleoplasm. In terms of biological role, required for maturation of ribosomal RNAs and formation of the large ribosomal subunit. The polypeptide is Ribosome biogenesis protein BOP1 homolog (Chlamydomonas reinhardtii (Chlamydomonas smithii)).